The sequence spans 197 residues: RILP-like protein 2 (197 aa).

A disordered region spans residues 1 to 24 (MEDHPVREEEDGEEDEGALAKSPL). Positions 8 to 17 (EEEDGEEDEG) are enriched in acidic residues. The region spanning 14–96 (EDEGALAKSP…KQEVEGLRKA (83 aa)) is the RH1 domain. A coiled-coil region spans residues 69 to 153 (VNEGSLAVEE…VQEELQCYRS (85 aa)). The 66-residue stretch at 119 to 184 (RPRFTLQELR…GNGEKEERTI (66 aa)) folds into the RH2 domain.

Belongs to the RILPL family. Homodimer. Interacts with RAC1. Interacts (via N-terminus) with MYO5A, the interaction is required for its role in dendrite formation. Interacts with RAB8A; interaction is dependent on the phosphorylation of RAB8A on 'Thr-72'. Interacts with RAB10 and RAB12; interaction is dependent on the phosphorylation of 'Thr-73' on RAB10 and 'Ser-105' on RAB12.

It is found in the cytoplasm. The protein localises to the cytosol. Its subcellular location is the cytoskeleton. The protein resides in the microtubule organizing center. It localises to the centrosome. It is found in the cell projection. The protein localises to the cilium. Its function is as follows. Involved in cell shape and neuronal morphogenesis, positively regulating the establishment and maintenance of dendritic spines. Plays a role in cellular protein transport, including protein transport away from primary cilia. May function via activation of RAC1 and PAK1. The polypeptide is RILP-like protein 2 (Rilpl2) (Mus musculus (Mouse)).